Reading from the N-terminus, the 96-residue chain is Aspartyl/glutamyl-tRNA(Asn/Gln) amidotransferase subunit C (96 aa).

The segment at 64 to 96 (REDEPEPGLPREEVLKNAPDQQDGQFRVPAILE) is disordered.

This sequence belongs to the GatC family. In terms of assembly, heterotrimer of A, B and C subunits.

The enzyme catalyses L-glutamyl-tRNA(Gln) + L-glutamine + ATP + H2O = L-glutaminyl-tRNA(Gln) + L-glutamate + ADP + phosphate + H(+). It catalyses the reaction L-aspartyl-tRNA(Asn) + L-glutamine + ATP + H2O = L-asparaginyl-tRNA(Asn) + L-glutamate + ADP + phosphate + 2 H(+). Its function is as follows. Allows the formation of correctly charged Asn-tRNA(Asn) or Gln-tRNA(Gln) through the transamidation of misacylated Asp-tRNA(Asn) or Glu-tRNA(Gln) in organisms which lack either or both of asparaginyl-tRNA or glutaminyl-tRNA synthetases. The reaction takes place in the presence of glutamine and ATP through an activated phospho-Asp-tRNA(Asn) or phospho-Glu-tRNA(Gln). In Geobacillus thermodenitrificans (strain NG80-2), this protein is Aspartyl/glutamyl-tRNA(Asn/Gln) amidotransferase subunit C.